Consider the following 714-residue polypeptide: Forkhead box protein P2 (714 aa).

The segment covering 1–28 (MMQESATETISNSSMNQNGMSTLSSQLD) has biased composition (polar residues). Disordered stretches follow at residues 1 to 45 (MMQE…SEVS) and 284 to 338 (KHGG…TGAS). Low complexity predominate over residues 291–304 (TTNNSSSTTSSTTS). Positions 314-323 (SIVNGQSSVL) are enriched in polar residues. Residues 325–336 (ARRDSSSHEETG) are compositionally biased toward basic and acidic residues. A C2H2-type zinc finger spans residues 345–370 (GVCKWPGCESICEDFGQFLKHLNNEH). The tract at residues 387–408 (VQQLEIQLSKERERLQAMMTHL) is leucine-zipper. The interval 421-425 (PLNLV) is CTBP1-binding. The span at 437–458 (TSPQSLPQTPTTPTAPVTPITQ) shows a compositional bias: low complexity. The disordered stretch occupies residues 437–464 (TSPQSLPQTPTTPTAPVTPITQGPSVIT). Residues 503 to 593 (RPPFTYATLI…SQKITGSPTL (91 aa)) constitute a DNA-binding region (fork-head). Disordered regions lie at residues 648–667 (LDHI…QPHI) and 677–714 (VIAE…EDLE). Positions 698 to 714 (LEDDREIEEEPLSEDLE) are enriched in acidic residues.

Forms homodimers and heterodimers with FOXP1 and FOXP4. Dimerization is required for DNA-binding. Interacts with CTBP1. Interacts with FOXP1. Interacts with TBR1. Interacts with ZMYM2.

Its subcellular location is the nucleus. Transcriptional repressor that may play a role in the specification and differentiation of lung epithelium. May also play a role in developing neural, gastrointestinal and cardiovascular tissues. Can act with CTBP1 to synergistically repress transcription but CTPBP1 is not essential. Plays a role in synapse formation by regulating SRPX2 levels. The protein is Forkhead box protein P2 (FOXP2) of Macaca mulatta (Rhesus macaque).